Reading from the N-terminus, the 537-residue chain is MDLFPIIMSVFAAIIGLVIGYVSVSAKMKSSKEAAELTLLNAEQEATNLRGQAEREADLIVKEAKRETSSLKKEALLEAKEEARKYREQVDAEFKSERQELKQIESRLTERASTLDRKDDNLSNKEKALEQKEQSLSDKSKHIDAREEQVAELEKQKAAELERVASLSQTEARDIILTQTEDKLSKEIATRIRDAEQDIKERSDKVAKNILVQAMQRIAGDYVAEQTNSTVHLPDDSMKGRIIGREGRNIRTFESLTGIDVIIDDTPEVVTLSGFDPIRREIARMTMEALLKDGRIHPARIEELVEKNRLEIDNRIREYGEAAAYEIGAPNLHPDLMKIMGRLQFRTSYGQNVLRHSIEVAKLSGIIAAELGENANLARRAGFLHDIGKSIDREVEGSHVEIGTELARKYKEHPVVVNTIASHHGDVEAESVIAVIVAAADALSAARPGARSESLESYIKRLQDLEEIANSFKGVKNSFALQAGREIRIMVQPDKIKDDKITILAHDVREKIENNLEYPGNIKVTVIREMRAVDYAK.

Residues 4-24 traverse the membrane as a helical segment; it reads FPIIMSVFAAIIGLVIGYVSV. Residues 112-148 are disordered; it reads ASTLDRKDDNLSNKEKALEQKEQSLSDKSKHIDAREE. In terms of domain architecture, KH spans 227-287; sequence TNSTVHLPDD…IRREIARMTM (61 aa). An HD domain is found at 353 to 446; it reads VLRHSIEVAK…VAAADALSAA (94 aa).

The protein belongs to the RNase Y family.

The protein localises to the cell membrane. Its function is as follows. Endoribonuclease that initiates mRNA decay. In Streptococcus sanguinis (strain SK36), this protein is Ribonuclease Y.